A 391-amino-acid chain; its full sequence is DNA primase small subunit PriS (391 aa).

Active-site residues include Asp98, Asp100, and Asp294.

This sequence belongs to the eukaryotic-type primase small subunit family. Heterodimer of a small subunit (PriS) and a large subunit (PriL). It depends on Mg(2+) as a cofactor. Requires Mn(2+) as cofactor.

Catalytic subunit of DNA primase, an RNA polymerase that catalyzes the synthesis of short RNA molecules used as primers for DNA polymerase during DNA replication. The small subunit contains the primase catalytic core and has DNA synthesis activity on its own. Binding to the large subunit stabilizes and modulates the activity, increasing the rate of DNA synthesis while decreasing the length of the DNA fragments, and conferring RNA synthesis capability. The DNA polymerase activity may enable DNA primase to also catalyze primer extension after primer synthesis. May also play a role in DNA repair. This is DNA primase small subunit PriS from Halobacterium salinarum (strain ATCC 29341 / DSM 671 / R1).